Reading from the N-terminus, the 274-residue chain is 4-diphosphocytidyl-2-C-methyl-D-erythritol kinase (274 aa).

Lys10 is an active-site residue. Residue 101-111 participates in ATP binding; sequence PTQAGLGGGSA. The active site involves Asp143.

The protein belongs to the GHMP kinase family. IspE subfamily.

It catalyses the reaction 4-CDP-2-C-methyl-D-erythritol + ATP = 4-CDP-2-C-methyl-D-erythritol 2-phosphate + ADP + H(+). It functions in the pathway isoprenoid biosynthesis; isopentenyl diphosphate biosynthesis via DXP pathway; isopentenyl diphosphate from 1-deoxy-D-xylulose 5-phosphate: step 3/6. Its function is as follows. Catalyzes the phosphorylation of the position 2 hydroxy group of 4-diphosphocytidyl-2C-methyl-D-erythritol. The polypeptide is 4-diphosphocytidyl-2-C-methyl-D-erythritol kinase (Helicobacter pylori (strain J99 / ATCC 700824) (Campylobacter pylori J99)).